The following is a 299-amino-acid chain: Ribosomal RNA small subunit methyltransferase A (299 aa).

S-adenosyl-L-methionine contacts are provided by Asn-44, Val-46, Gly-71, Glu-92, Asp-122, and Asn-141.

It belongs to the class I-like SAM-binding methyltransferase superfamily. rRNA adenine N(6)-methyltransferase family. RsmA subfamily.

The protein resides in the cytoplasm. The enzyme catalyses adenosine(1518)/adenosine(1519) in 16S rRNA + 4 S-adenosyl-L-methionine = N(6)-dimethyladenosine(1518)/N(6)-dimethyladenosine(1519) in 16S rRNA + 4 S-adenosyl-L-homocysteine + 4 H(+). Its function is as follows. Specifically dimethylates two adjacent adenosines (A1518 and A1519) in the loop of a conserved hairpin near the 3'-end of 16S rRNA in the 30S particle. May play a critical role in biogenesis of 30S subunits. The protein is Ribosomal RNA small subunit methyltransferase A of Rhodococcus erythropolis (strain PR4 / NBRC 100887).